Here is a 196-residue protein sequence, read N- to C-terminus: Serine recombinase PinR (196 aa).

A Resolvase/invertase-type recombinase catalytic domain is found at 3–143 (RIFAYCRIST…SGIVRARGAG (141 aa)). Serine 11 serves as the catalytic O-(5'-phospho-DNA)-serine intermediate.

It belongs to the site-specific recombinase resolvase family.

This is Serine recombinase PinR (pinR) from Escherichia coli (strain K12).